A 247-amino-acid chain; its full sequence is Protein FAM133B (247 aa).

Disordered regions lie at residues 19–38 (SRGP…NRPR) and 70–247 (KKEL…PDSP). Residues 70–80 (KKELEKHREKL) are compositionally biased toward basic and acidic residues. The residue at position 82 (Ser-82) is a Phosphoserine. Residues 89–102 (KKRQRKKKEKKKSG) are compositionally biased toward basic residues. The segment covering 103-119 (RYSSSSSSSSDSSSSSS) has biased composition (low complexity). Basic residues predominate over residues 128-140 (QGKRRKKKKNRSH). The span at 165–176 (KDGTEKEKDIKG) shows a compositional bias: basic and acidic residues. A phosphoserine mark is found at Ser-191, Ser-192, Ser-194, and Ser-196. Residues 211–221 (SSEEREKATEK) show a composition bias toward basic and acidic residues. A compositionally biased stretch (basic residues) spans 222-239 (TKKKKKHKKHSKKKKKKA).

Belongs to the FAM133 family.

The protein is Protein FAM133B (FAM133B) of Homo sapiens (Human).